The chain runs to 159 residues: Ribosomal RNA large subunit methyltransferase H (159 aa).

Residues leucine 76, glycine 108, and 127-132 (FSNMTF) each bind S-adenosyl-L-methionine.

This sequence belongs to the RNA methyltransferase RlmH family. As to quaternary structure, homodimer.

It localises to the cytoplasm. The enzyme catalyses pseudouridine(1915) in 23S rRNA + S-adenosyl-L-methionine = N(3)-methylpseudouridine(1915) in 23S rRNA + S-adenosyl-L-homocysteine + H(+). Functionally, specifically methylates the pseudouridine at position 1915 (m3Psi1915) in 23S rRNA. This Staphylococcus epidermidis (strain ATCC 35984 / DSM 28319 / BCRC 17069 / CCUG 31568 / BM 3577 / RP62A) protein is Ribosomal RNA large subunit methyltransferase H.